A 104-amino-acid polypeptide reads, in one-letter code: UPF0145 protein RD1_2695 (104 aa).

Belongs to the UPF0145 family.

In Roseobacter denitrificans (strain ATCC 33942 / OCh 114) (Erythrobacter sp. (strain OCh 114)), this protein is UPF0145 protein RD1_2695.